A 182-amino-acid chain; its full sequence is Putative pre-16S rRNA nuclease (182 aa).

Belongs to the YqgF nuclease family.

It is found in the cytoplasm. Could be a nuclease involved in processing of the 5'-end of pre-16S rRNA. In Corynebacterium glutamicum (strain ATCC 13032 / DSM 20300 / JCM 1318 / BCRC 11384 / CCUG 27702 / LMG 3730 / NBRC 12168 / NCIMB 10025 / NRRL B-2784 / 534), this protein is Putative pre-16S rRNA nuclease.